The following is a 229-amino-acid chain: Cytidylate kinase (229 aa).

12–20 lines the ATP pocket; sequence GPSGAGKGT.

Belongs to the cytidylate kinase family. Type 1 subfamily.

The protein localises to the cytoplasm. The catalysed reaction is CMP + ATP = CDP + ADP. The enzyme catalyses dCMP + ATP = dCDP + ADP. The polypeptide is Cytidylate kinase (Shewanella frigidimarina (strain NCIMB 400)).